The sequence spans 424 residues: Caspase-2 (424 aa).

The propeptide occupies methionine 1–aspartate 140. Positions methionine 7–threonine 96 constitute a CARD domain. Residues histidine 248 and cysteine 291 contribute to the active site. Basic and acidic residues predominate over residues threonine 296–aspartate 310. The segment at threonine 296 to leucine 325 is disordered.

The protein belongs to the peptidase C14A family. As to quaternary structure, heterotetramer that consists of two anti-parallel arranged heterodimers, each one formed by a p18 subunit and a p12 subunit.

The enzyme catalyses Strict requirement for an Asp residue at P1, with 316-Asp being essential for proteolytic activity and has a preferred cleavage sequence of Val-Asp-Val-Ala-Asp-|-.. Its function is as follows. Involved in the activation cascade of caspases responsible for apoptosis execution. Might function by either activating some proteins required for cell death or inactivating proteins necessary for cell survival. The sequence is that of Caspase-2 (CASP2) from Gallus gallus (Chicken).